Reading from the N-terminus, the 179-residue chain is Large ribosomal subunit protein uL5 (179 aa).

This sequence belongs to the universal ribosomal protein uL5 family. Part of the 50S ribosomal subunit; part of the 5S rRNA/L5/L18/L25 subcomplex. Contacts the 5S rRNA and the P site tRNA. Forms a bridge to the 30S subunit in the 70S ribosome.

This is one of the proteins that bind and probably mediate the attachment of the 5S RNA into the large ribosomal subunit, where it forms part of the central protuberance. In the 70S ribosome it contacts protein S13 of the 30S subunit (bridge B1b), connecting the 2 subunits; this bridge is implicated in subunit movement. Contacts the P site tRNA; the 5S rRNA and some of its associated proteins might help stabilize positioning of ribosome-bound tRNAs. This chain is Large ribosomal subunit protein uL5, found in Paraburkholderia phymatum (strain DSM 17167 / CIP 108236 / LMG 21445 / STM815) (Burkholderia phymatum).